A 122-amino-acid polypeptide reads, in one-letter code: Large ribosomal subunit protein uL14 (122 aa).

This sequence belongs to the universal ribosomal protein uL14 family. Part of the 50S ribosomal subunit. Forms a cluster with proteins L3 and L19. In the 70S ribosome, L14 and L19 interact and together make contacts with the 16S rRNA in bridges B5 and B8. Can interact with ribosomal silencing factor RsfS, which may inhibit ribosomal subunit association.

In terms of biological role, binds to 23S rRNA. Forms part of two intersubunit bridges in the 70S ribosome. This Synechocystis sp. (strain ATCC 27184 / PCC 6803 / Kazusa) protein is Large ribosomal subunit protein uL14.